The primary structure comprises 408 residues: Histidine--tRNA ligase (408 aa).

It belongs to the class-II aminoacyl-tRNA synthetase family. As to quaternary structure, homodimer.

It is found in the cytoplasm. The catalysed reaction is tRNA(His) + L-histidine + ATP = L-histidyl-tRNA(His) + AMP + diphosphate + H(+). This is Histidine--tRNA ligase from Campylobacter jejuni subsp. jejuni serotype O:2 (strain ATCC 700819 / NCTC 11168).